We begin with the raw amino-acid sequence, 234 residues long: Putative B3 domain-containing protein At2g18810 (234 aa).

A disordered region spans residues 55–88 (CKNQDPEQNPNRVASSPSLCHVKSKRPQKGVSNK). Residues 60-72 (PEQNPNRVASSPS) show a composition bias toward polar residues. Residues 87–185 (NKPILDMDFL…MLFFALVLSD (99 aa)) constitute a DNA-binding region (TF-B3).

It is found in the nucleus. This Arabidopsis thaliana (Mouse-ear cress) protein is Putative B3 domain-containing protein At2g18810.